We begin with the raw amino-acid sequence, 183 residues long: MVMCVRAVLVCVLLELSRAAPHAHINRLALFPDKSAWCEAKNITQIVGHTGCTPRSIQNRACLGQCFSYSVPNTFPQSTESLVHCDSCMPAQTQWEVVTLDCSGSDEAPRVDKLVERILHCSCQSCSKESSQEGALLQLYPHEGAQDLPSLPDATHTHPQHAHMQADQRDADAHLDMHAPEAG.

The signal sequence occupies residues 1–19; that stretch reads MVMCVRAVLVCVLLELSRA. Intrachain disulfides connect C38–C88, C52–C102, C62–C121, C66–C123, and C85–C126. The 90-residue stretch at 38–127 folds into the CTCK domain; sequence CEAKNITQIV…ILHCSCQSCS (90 aa). The segment at 145–170 is disordered; that stretch reads AQDLPSLPDATHTHPQHAHMQADQRD.

Belongs to the DAN family.

The protein resides in the secreted. In terms of biological role, may act as a tumor suppressor. This chain is Neuroblastoma suppressor of tumorigenicity 1 (nbl1), found in Danio rerio (Zebrafish).